The sequence spans 902 residues: 4-hydroxyphenylacetate decarboxylase glycyl radical subunit (902 aa).

A PFL domain is found at 38 to 774 (KRAEDLLDVY…ATLATPDGRL (737 aa)). Serine 348 and cysteine 507 together coordinate 4-hydroxyphenylacetate. Catalysis depends on cysteine 507, which acts as the Cysteine radical intermediate. Catalysis depends on glutamate 509, which acts as the Proton donor. Residues histidine 540 and glutamate 641 each contribute to the 4-hydroxyphenylacetate site. Positions 782–902 (GSVSAYAGTD…VIARTEYEGV (121 aa)) constitute a Glycine radical domain. Glycine 877 is modified (glycine radical).

Belongs to the glycyl radical enzyme (GRE) family. HPAD subfamily. As to quaternary structure, heterooctamer consisting of 4 large (HpdB) subunits and 4 small (HpdC) subunits. Also forms a catalytically inactive homodimer. Post-translationally, phosphorylated on serine. Phosphorylation may trigger the formation of the active heterooctamers and thereby regulates enzyme activity. Requires the activating protein HpdA to generate the key active site glycyl radical that is involved in catalysis.

The enzyme catalyses 4-hydroxyphenylacetate + H(+) = 4-methylphenol + CO2. It carries out the reaction 3,4-dihydroxyphenylacetate + H(+) = 4-methylcatechol + CO2. The catalysed reaction is 2-hydroxy-2-(4-hydroxyphenyl)acetate + H(+) = 4-hydroxybenzyl alcohol + CO2. Its activity is regulated as follows. Enzyme activity catalyzed by the HPA decarboxylase complex is rapidly and irreversibly inactivated by oxygen. Competitively inhibited by p-hydroxyphenylacetamide. Not inhibited by m- or o-hydroxyphenyl-acetate, p-hydroxybenzoate or p-hydroxyphenylpropionate. In terms of biological role, glycyl radical subunit of the HPA decarboxylase that decarboxylates phenylacetates with a hydroxyl group in the p-position. Active toward 4-hydroxyphenylacetate, 3,4-dihydroxyphenylacetate and to a lesser extent p-hydroxymandelate (2-hydroxy-2-(4-hydroxyphenyl)acetate), forming 4-methylphenol, 4-methylcatechol and 4-hydroxybenzylalcohol, respectively. Is likely involved in the catabolism of aromatic amino acids such as tyrosine fermentation. 4-methylphenol (p-cresol) formation provides metabolic toxicity, which may benefit the pathogen C.difficile by suppression of the endogenous gastrointestinal microflora, allowing the development of gastrointestinal infections. The large subunit is the catalytic subunit that binds the substrate. This is 4-hydroxyphenylacetate decarboxylase glycyl radical subunit from Clostridioides difficile (Peptoclostridium difficile).